Reading from the N-terminus, the 416-residue chain is Homeobox protein ceh-62 (416 aa).

Over residues 103 to 113 (TPTPIIATPSI) the composition is skewed to low complexity. Disordered regions lie at residues 103-144 (TPTP…QATR) and 178-247 (FQNR…FPPT). Over residues 118 to 127 (QPLQSPSAPN) the composition is skewed to polar residues. Residues 130 to 189 (SRRKRTTFSPEQATRLEAEYIGDSYMAREKRHLLAQSLKLSENQVKTWFQNRRAKDKRDR) constitute a DNA-binding region (homeobox). Residues 193–218 (NASNHTSNSRRSSPSRKSSSDSTPTP) are compositionally biased toward low complexity. The span at 219–240 (TQATQFDMPTQIQTASPPTTAD) shows a compositional bias: polar residues.

It localises to the nucleus. In Caenorhabditis elegans, this protein is Homeobox protein ceh-62.